The chain runs to 263 residues: 4-hydroxy-tetrahydrodipicolinate reductase (263 aa).

Residues 8-13 (GACGKM), Asp-34, 97-99 (GTT), and 123-126 (APNF) contribute to the NAD(+) site. His-153 (proton donor/acceptor) is an active-site residue. (S)-2,3,4,5-tetrahydrodipicolinate is bound at residue His-154. Lys-157 (proton donor) is an active-site residue. A (S)-2,3,4,5-tetrahydrodipicolinate-binding site is contributed by 163-164 (GT).

Belongs to the DapB family.

It localises to the cytoplasm. It catalyses the reaction (S)-2,3,4,5-tetrahydrodipicolinate + NAD(+) + H2O = (2S,4S)-4-hydroxy-2,3,4,5-tetrahydrodipicolinate + NADH + H(+). The catalysed reaction is (S)-2,3,4,5-tetrahydrodipicolinate + NADP(+) + H2O = (2S,4S)-4-hydroxy-2,3,4,5-tetrahydrodipicolinate + NADPH + H(+). It functions in the pathway amino-acid biosynthesis; L-lysine biosynthesis via DAP pathway; (S)-tetrahydrodipicolinate from L-aspartate: step 4/4. Functionally, catalyzes the conversion of 4-hydroxy-tetrahydrodipicolinate (HTPA) to tetrahydrodipicolinate. This chain is 4-hydroxy-tetrahydrodipicolinate reductase, found in Carboxydothermus hydrogenoformans (strain ATCC BAA-161 / DSM 6008 / Z-2901).